We begin with the raw amino-acid sequence, 267 residues long: 27 kDa core protein (267 aa).

It belongs to the chordopoxvirinae D3 family.

Its subcellular location is the virion. Functionally, late protein which is part of a large complex required for early virion morphogenesis. This complex participates in the formation of virosomes and the incorporation of virosomal contents into nascent immature virions. The sequence is that of 27 kDa core protein from Canarypox virus (CNPV).